Consider the following 335-residue polypeptide: GTPase Obg (335 aa).

In terms of domain architecture, Obg spans 1 to 158 (MFVDQITLEL…RQVELELKLI (158 aa)). Residues 126 to 145 (NTFFKTSVNRAPTKATPGKP) are disordered. Positions 159-334 (ADIGLVGFPN…LYRFFTQRLA (176 aa)) constitute an OBG-type G domain. GTP contacts are provided by residues 165 to 172 (GFPNAGKS), 190 to 194 (FTTLA), 215 to 218 (DIPG), 285 to 288 (NKID), and 315 to 317 (SGL). Residues serine 172 and threonine 192 each coordinate Mg(2+).

The protein belongs to the TRAFAC class OBG-HflX-like GTPase superfamily. OBG GTPase family. Monomer. The cofactor is Mg(2+).

It is found in the cytoplasm. In terms of biological role, an essential GTPase which binds GTP, GDP and possibly (p)ppGpp with moderate affinity, with high nucleotide exchange rates and a fairly low GTP hydrolysis rate. Plays a role in control of the cell cycle, stress response, ribosome biogenesis and in those bacteria that undergo differentiation, in morphogenesis control. The chain is GTPase Obg from Chlamydia pneumoniae (Chlamydophila pneumoniae).